The following is a 328-amino-acid chain: MIAGATAPSSQHEILIASNLIKKPSTSQNKTPTAQSSSGNNGAADGAPQGYHHHHHHHRHLWWPRTTDHQYWCVLRKNQFAYYKTRDEREAISVIPRFDILNFKISELDGILTVYTPSKDLIFKFPRGQNEKVGMELMHNWKIALEKFLSSPSGNESVTTGSDYDEEEDDDDLIVVDEKAGPSSSKHSCSLTMDEQLSREDKEFYRMFDPRNAEHQVCSGILYTKVKKKKLFNRAKWQKFNVELTNTSFNLYSFKTGKLKKSIKLDKIIDCIELDNNSKMKNDDTNFALITFDERLSFKAANDQDMVDWIINFKSGILIRKKLKAENI.

The tract at residues asparagine 19 to histidine 52 is disordered. Over residues proline 24–asparagine 41 the composition is skewed to polar residues. Residues alanine 213–isoleucine 328 form a required for targeting to the cell membrane region. Residues histidine 215 to leucine 318 form the PH domain.

In terms of assembly, interacts with MSS4 (via N-terminus); to negatively regulate MSS4 kinase activity.

It is found in the cell membrane. Its subcellular location is the cytoplasm. In terms of biological role, binds phosphatidylinositol 4,5-bisphosphate (PtdIns(4,5)P2/PIP2) at the cell membrane. Negatively regulates the activity of phosphatidylinositol 4-phosphate 5-kinase MSS4. This Saccharomyces cerevisiae (strain ATCC 204508 / S288c) (Baker's yeast) protein is Pleckstrin homology domain protein OPY1 (OPY1).